A 144-amino-acid chain; its full sequence is Transcriptional regulator MraZ (144 aa).

SpoVT-AbrB domains follow at residues 6-48 (TYTP…PTDV) and 77-120 (ADEG…DPVR).

It belongs to the MraZ family. In terms of assembly, forms oligomers.

The protein resides in the cytoplasm. The protein localises to the nucleoid. The sequence is that of Transcriptional regulator MraZ from Nocardioides sp. (strain ATCC BAA-499 / JS614).